The following is a 414-amino-acid chain: Sec-independent protein translocase protein TatC (414 aa).

Residues 1 to 21 (MTQSTSVSKGGRVSRKAKKNP) form a disordered region. The next 6 helical transmembrane spans lie at 45–65 (IAVTTIIGFIWYEHGIPAWAI), 119–139 (GGLAGLVMACPIWLIEIWRFI), 157–177 (IAGFLFVLGVVAAYLVLPMGL), 200–220 (FVIALILVFGLSFEVPLFTAM), 238–258 (IMIVVIFIFAAIATPGQDPIS), and 259–279 (MLVLALTLVVLMELALQFTRI). The interval 315–414 (IYDGDHKGIA…IQSSSFDDVL (100 aa)) is disordered. Over residues 323–336 (IAGGGDAHPAGGSG) the composition is skewed to gly residues. A compositionally biased stretch (low complexity) spans 345–357 (TAPTRAPSASESP). Residues 403-414 (DTIQSSSFDDVL) are compositionally biased toward polar residues.

The protein belongs to the TatC family. As to quaternary structure, the Tat system comprises two distinct complexes: a TatABC complex, containing multiple copies of TatA, TatB and TatC subunits, and a separate TatA complex, containing only TatA subunits. Substrates initially bind to the TatABC complex, which probably triggers association of the separate TatA complex to form the active translocon.

The protein resides in the cell membrane. In terms of biological role, part of the twin-arginine translocation (Tat) system that transports large folded proteins containing a characteristic twin-arginine motif in their signal peptide across membranes. Together with TatB, TatC is part of a receptor directly interacting with Tat signal peptides. The chain is Sec-independent protein translocase protein TatC from Corynebacterium kroppenstedtii (strain DSM 44385 / JCM 11950 / CIP 105744 / CCUG 35717).